The chain runs to 200 residues: Ciliary microtubule inner protein 2C (200 aa).

This sequence belongs to the CIMIP2 family. Microtubule inner protein component of sperm flagellar doublet microtubules.

It localises to the cytoplasm. Its subcellular location is the cytoskeleton. The protein resides in the cilium axoneme. It is found in the flagellum axoneme. In terms of biological role, microtubule inner protein (MIP) part of the dynein-decorated doublet microtubules (DMTs) in cilia axoneme, which is required for motile cilia beating. Binds to the intra-tubulin interfaces. The sequence is that of Ciliary microtubule inner protein 2C (Cimip2c) from Mus musculus (Mouse).